Reading from the N-terminus, the 474-residue chain is Ribulose bisphosphate carboxylase large chain (474 aa).

The residue at position 2 (Pro2) is an N-acetylproline. N6,N6,N6-trimethyllysine is present on Lys13. The substrate site is built by Asn122 and Thr172. Catalysis depends on Lys174, which acts as the Proton acceptor. Lys176 provides a ligand contact to substrate. Lys200, Asp202, and Glu203 together coordinate Mg(2+). Lys200 is modified (N6-carboxylysine). His293 functions as the Proton acceptor in the catalytic mechanism. The substrate site is built by Arg294, His326, and Ser378.

The protein belongs to the RuBisCO large chain family. Type I subfamily. In terms of assembly, heterohexadecamer of 8 large chains and 8 small chains; disulfide-linked. The disulfide link is formed within the large subunit homodimers. Requires Mg(2+) as cofactor. Post-translationally, the disulfide bond which can form in the large chain dimeric partners within the hexadecamer appears to be associated with oxidative stress and protein turnover.

It localises to the plastid. The protein resides in the chloroplast. The enzyme catalyses 2 (2R)-3-phosphoglycerate + 2 H(+) = D-ribulose 1,5-bisphosphate + CO2 + H2O. The catalysed reaction is D-ribulose 1,5-bisphosphate + O2 = 2-phosphoglycolate + (2R)-3-phosphoglycerate + 2 H(+). Functionally, ruBisCO catalyzes two reactions: the carboxylation of D-ribulose 1,5-bisphosphate, the primary event in carbon dioxide fixation, as well as the oxidative fragmentation of the pentose substrate in the photorespiration process. Both reactions occur simultaneously and in competition at the same active site. This chain is Ribulose bisphosphate carboxylase large chain, found in Oltmannsiellopsis viridis (Marine flagellate).